Reading from the N-terminus, the 997-residue chain is MSNRGGGGHGGASRGRGGGRRSDQRQDQSSGQVAWPGLQQSYGGRGGSVSAGRGRGNVGRGENTGDLTATQVPVASAVSGGRGRGNIGDPTFSVASSSKTVSVASSSKEESKNTEVSETMSNLQITSTETKPEMTSLPPASSKAVTFPVRPGRGTLGKKVMVRANHFLVQVADRDLYHYDVSINPEVISKTVNRNVMKLLVKNYKDSHLGGKSPAYDGRKSLYTAGPLPFDSKEFVVNLAEKRADGSSGKDRPFKVAVKNVTSTDLYQLQQFLDRKQREAPYDTIQVLDVVLRDKPSNDYVSVGRSFFHTSLGKDARDGRGELGDGIEYWRGYFQSLRLTQMGLSLNIDVSARSFYEPIVVTDFISKFLNIRDLNRPLRDSDRLKVKKVLRTLKVKLLHWNGTKSAKISGISSLPIRELRFTLEDKSEKTVVQYFAEKYNYRVKYQALPAIQTGSDTRPVYLPMELCQIDEGQRYTKRLNEKQVTALLKATCQRPPDRENSIKNLVVKNNYNDDLSKEFGMSVTTQLASIEARVLPPPMLKYHDSGKEKMVNPRLGQWNMIDKKMVNGAKVTSWTCVSFSTRIDRGLPQEFCKQLIGMCVSKGMEFKPQPAIPFISCPPEHIEEALLDIHKRAPGLQLLIVILPDVTGSYGKIKRICETELGIVSQCCQPRQVNKLNKQYMENVALKINVKTGGRNTVLNDAIRRNIPLITDRPTIIMGADVTHPQPGEDSSPSIAAVVASMDWPEINKYRGLVSAQAHREEIIQDLYKLVQDPQRGLVHSGLIREHFIAFRRATGQIPQRIIFYRDGVSEGQFSQVLLHEMTAIRKACNSLQENYVPRVTFVIVQKRHHTRLFPEQHGNRDMTDKSGNIQPGTVVDTKICHPNEFDFYLNSHAGIQGTSRPAHYHVLLDENGFTADQLQMLTNNLCYTYARCTKSVSIVPPAYYAHLAAFRARYYMESEMSDGGSSRSRSSTTGVGQVISQLPAIKDNVKEVMFYC.

Composition is skewed to gly residues over residues 1–16 and 43–59; these read MSNR…SRGR and GGRG…GNVG. Residues 1–144 form a disordered region; that stretch reads MSNRGGGGHG…TSLPPASSKA (144 aa). A compositionally biased stretch (low complexity) spans 93–106; the sequence is SVASSSKTVSVASS. Polar residues predominate over residues 116 to 129; it reads VSETMSNLQITSTE. One can recognise a PAZ domain in the interval 360 to 471; that stretch reads VVTDFISKFL…LPMELCQIDE (112 aa). Residues 638 to 958 enclose the Piwi domain; it reads LLIVILPDVT…AAFRARYYME (321 aa). A divalent metal cation is bound by residues Asp-721 and Asp-807. Interaction with guide RNA stretches follow at residues 847–848, 893–901, and 930–952; these read KR, HAGIQGTSR, and YARC…AAFR. His-947 serves as a coordination point for a divalent metal cation.

The protein belongs to the argonaute family. Ago subfamily. Requires Mg(2+) as cofactor. It depends on Mn(2+) as a cofactor.

In terms of biological role, involved in RNA-mediated post-transcriptional gene silencing (PTGS). Main component of the RNA-induced silencing complex (RISC) that binds to a short guide RNA such as a microRNA (miRNA) or small interfering RNA (siRNA). RISC uses the mature miRNA or siRNA as a guide for slicer-directed cleavage of homologous mRNAs to repress gene expression. Associates with siRNAs of various sizes, from 21-24 nucleotide in length and preferentially recruits small RNAs with a 5' terminal cytosine. Probably involved in antiviral RNA silencing. Associates with siRNAs derived from cucumber mosaic virus (CMV). Targeted by the turnip yellows virus (TuYV) protein P0 (via F-box-like domain) for probable proteasome degradation and thereby inactivating AGO5 function in RNA silencing. The chain is Protein argonaute 5 (AGO5) from Arabidopsis thaliana (Mouse-ear cress).